We begin with the raw amino-acid sequence, 302 residues long: Methionyl-tRNA formyltransferase (302 aa).

106 to 109 (SVLP) provides a ligand contact to (6S)-5,6,7,8-tetrahydrofolate.

It belongs to the Fmt family.

It catalyses the reaction L-methionyl-tRNA(fMet) + (6R)-10-formyltetrahydrofolate = N-formyl-L-methionyl-tRNA(fMet) + (6S)-5,6,7,8-tetrahydrofolate + H(+). In terms of biological role, attaches a formyl group to the free amino group of methionyl-tRNA(fMet). The formyl group appears to play a dual role in the initiator identity of N-formylmethionyl-tRNA by promoting its recognition by IF2 and preventing the misappropriation of this tRNA by the elongation apparatus. The sequence is that of Methionyl-tRNA formyltransferase from Hydrogenobaculum sp. (strain Y04AAS1).